Reading from the N-terminus, the 336-residue chain is HTH-type transcriptional regulator SyrM (336 aa).

One can recognise an HTH lysR-type domain in the interval 41-98; that stretch reads IDLNLLVALEALLEYRNVTHAGQHIGRSQPAMSRALGRLRGLFNDDLLVRSSTGLIPT. The segment at residues 58–77 is a DNA-binding region (H-T-H motif); sequence VTHAGQHIGRSQPAMSRALG.

This sequence belongs to the LysR transcriptional regulatory family.

Acts in trans to stimulate nod gene expression via nodD3 and exo gene expression via SyrA. This Rhizobium etli protein is HTH-type transcriptional regulator SyrM (syrM).